The following is a 161-amino-acid chain: Myosin regulatory light chain (161 aa).

Residues serine 13 and serine 14 each carry the phosphoserine modification. EF-hand domains lie at 20 to 55 (EQVAELKEAFELFDKDRTGFIKKDALKTTCKQFGVF), 56 to 91 (VMEDQLDAMFAEADTTKSGAIGFPEFMSMMSRRMKQ), and 93 to 128 (SNEQILMNAFKTFDPEGNGYILTKDLSKALTTLGDK).

In terms of assembly, myosin is a hexamer of 2 heavy chains and 4 light chains (two regulatory light chains and two essential light chains).

The protein is Myosin regulatory light chain (mlcR) of Dictyostelium discoideum (Social amoeba).